A 640-amino-acid chain; its full sequence is UvrABC system protein C (640 aa).

In terms of domain architecture, GIY-YIG spans 35–113; that stretch reads DAPGVYRMIG…IKQLKPRFNV (79 aa). Residues 223–258 form the UVR domain; the sequence is RAVMATMAKAMEEAAEELEFERAARLRDRIRALSAV.

Belongs to the UvrC family. As to quaternary structure, interacts with UvrB in an incision complex.

The protein localises to the cytoplasm. The UvrABC repair system catalyzes the recognition and processing of DNA lesions. UvrC both incises the 5' and 3' sides of the lesion. The N-terminal half is responsible for the 3' incision and the C-terminal half is responsible for the 5' incision. This Caulobacter vibrioides (strain ATCC 19089 / CIP 103742 / CB 15) (Caulobacter crescentus) protein is UvrABC system protein C.